We begin with the raw amino-acid sequence, 155 residues long: Nuclear cap-binding protein subunit 2 (155 aa).

MRNA-binding positions include Y19, Y42, 111-115, 122-126, and 132-133; these read RTDWD, RQYGR, and QV. Residues 39-117 form the RRM domain; it reads ATLYVGNLSF…RIIRTDWDAG (79 aa). Positions 121-155 are disordered; it reads GRQYGRGKSGGQVRDEYRQDYDPARGGYGKMVQKS. The span at 133 to 143 shows a compositional bias: basic and acidic residues; the sequence is VRDEYRQDYDP.

It belongs to the RRM NCBP2 family. As to quaternary structure, component of the nuclear cap-binding complex (CBC), a heterodimer composed of ncbp1/cbp80 and ncbp2/cbp20 that interacts with m7GpppG-capped RNA.

Its subcellular location is the nucleus. The protein resides in the cytoplasm. Component of the cap-binding complex (CBC), which binds co-transcriptionally to the 5' cap of pre-mRNAs and is involved in various processes such as pre-mRNA splicing, translation regulation, nonsense-mediated mRNA decay, RNA-mediated gene silencing (RNAi) by microRNAs (miRNAs) and mRNA export. The CBC complex is involved in mRNA export from the nucleus, leading to the recruitment of the mRNA export machinery to the 5' end of mRNA and to mRNA export in a 5' to 3' direction through the nuclear pore. The CBC complex is also involved in mediating U snRNA and intronless mRNAs export from the nucleus. The CBC complex is essential for a pioneer round of mRNA translation, before steady state translation when the CBC complex is replaced by cytoplasmic cap-binding protein eIF4E. The pioneer round of mRNA translation mediated by the CBC complex plays a central role in nonsense-mediated mRNA decay (NMD), NMD only taking place in mRNAs bound to the CBC complex, but not on eIF4E-bound mRNAs. The CBC complex enhances NMD in mRNAs containing at least one exon-junction complex (EJC), promoting the interaction between upf1 and upf2. The CBC complex is also involved in 'failsafe' NMD, which is independent of the EJC complex, while it does not participate in Staufen-mediated mRNA decay (SMD). During cell proliferation, the CBC complex is also involved in microRNAs (miRNAs) biogenesis via its interaction with srrt/ars2, thereby being required for miRNA-mediated RNA interference. The CBC complex also acts as a negative regulator of parn, thereby acting as an inhibitor of mRNA deadenylation. In the CBC complex, ncbp2/cbp20 recognizes and binds capped RNAs (m7GpppG-capped RNA) but requires ncbp1/cbp80 to stabilize the movement of its N-terminal loop and lock the CBC into a high affinity cap-binding state with the cap structure. The conventional cap-binding complex with NCBP2 binds both small nuclear RNA (snRNA) and messenger (mRNA) and is involved in their export from the nucleus. The sequence is that of Nuclear cap-binding protein subunit 2 (ncbp2) from Danio rerio (Zebrafish).